Consider the following 330-residue polypeptide: tRNA N6-adenosine threonylcarbamoyltransferase (330 aa).

Residues histidine 110 and histidine 114 each contribute to the Fe cation site. Substrate is bound by residues 133–137, aspartate 166, glycine 179, aspartate 183, and asparagine 271; that span reads MVSGG. Aspartate 299 lines the Fe cation pocket.

The protein belongs to the KAE1 / TsaD family. Fe(2+) serves as cofactor.

It localises to the cytoplasm. The catalysed reaction is L-threonylcarbamoyladenylate + adenosine(37) in tRNA = N(6)-L-threonylcarbamoyladenosine(37) in tRNA + AMP + H(+). Required for the formation of a threonylcarbamoyl group on adenosine at position 37 (t(6)A37) in tRNAs that read codons beginning with adenine. Is involved in the transfer of the threonylcarbamoyl moiety of threonylcarbamoyl-AMP (TC-AMP) to the N6 group of A37, together with TsaE and TsaB. TsaD likely plays a direct catalytic role in this reaction. The chain is tRNA N6-adenosine threonylcarbamoyltransferase from Thermosipho africanus (strain TCF52B).